The sequence spans 95 residues: Co-chaperonin GroES (95 aa).

Belongs to the GroES chaperonin family. As to quaternary structure, heptamer of 7 subunits arranged in a ring. Interacts with the chaperonin GroEL.

It localises to the cytoplasm. Its function is as follows. Together with the chaperonin GroEL, plays an essential role in assisting protein folding. The GroEL-GroES system forms a nano-cage that allows encapsulation of the non-native substrate proteins and provides a physical environment optimized to promote and accelerate protein folding. GroES binds to the apical surface of the GroEL ring, thereby capping the opening of the GroEL channel. This chain is Co-chaperonin GroES, found in Chlorobium phaeobacteroides (strain DSM 266 / SMG 266 / 2430).